A 65-amino-acid polypeptide reads, in one-letter code: Large ribosomal subunit protein bL35 (65 aa).

This sequence belongs to the bacterial ribosomal protein bL35 family.

The protein is Large ribosomal subunit protein bL35 of Psychrobacter sp. (strain PRwf-1).